Reading from the N-terminus, the 381-residue chain is Protein-glutamate methylesterase/protein-glutamine glutaminase (381 aa).

Residues 8 to 125 enclose the Response regulatory domain; that stretch reads QVLCIDDSAL…RDGMNEYADQ (118 aa). 4-aspartylphosphate is present on D59. The CheB-type methylesterase domain occupies 183–375; the sequence is FSSTEKLIIV…PHVLARLSAH (193 aa). Active-site residues include S195, H221, and D317.

The protein belongs to the CheB family. Post-translationally, phosphorylated by CheA. Phosphorylation of the N-terminal regulatory domain activates the methylesterase activity.

The protein resides in the cytoplasm. The catalysed reaction is [protein]-L-glutamate 5-O-methyl ester + H2O = L-glutamyl-[protein] + methanol + H(+). It catalyses the reaction L-glutaminyl-[protein] + H2O = L-glutamyl-[protein] + NH4(+). In terms of biological role, involved in chemotaxis. Part of a chemotaxis signal transduction system that modulates chemotaxis in response to various stimuli. Catalyzes the demethylation of specific methylglutamate residues introduced into the chemoreceptors (methyl-accepting chemotaxis proteins or MCP) by CheR. Also mediates the irreversible deamidation of specific glutamine residues to glutamic acid. This chain is Protein-glutamate methylesterase/protein-glutamine glutaminase, found in Ralstonia nicotianae (strain ATCC BAA-1114 / GMI1000) (Ralstonia solanacearum).